A 77-amino-acid chain; its full sequence is Conotoxin Lt7.1 (77 aa).

An N-terminal signal peptide occupies residues 1–19 (MEKLTILLLVAALLMSTQG). Positions 20 to 49 (LIQSGGENRPKEKIKFLSKRKTVAESWWEG) are excised as a propeptide. 3 disulfide bridges follow: cysteine 51–cysteine 65, cysteine 58–cysteine 69, and cysteine 64–cysteine 74.

The protein belongs to the conotoxin O2 superfamily. Expressed by the venom duct.

It localises to the secreted. The sequence is that of Conotoxin Lt7.1 from Conus litteratus (Lettered cone).